A 418-amino-acid chain; its full sequence is UDP-N-acetylglucosamine 1-carboxyvinyltransferase (418 aa).

A phosphoenolpyruvate-binding site is contributed by 23–24; it reads KN. R93 contacts UDP-N-acetyl-alpha-D-glucosamine. The Proton donor role is filled by D117. UDP-N-acetyl-alpha-D-glucosamine is bound by residues D305 and V327.

Belongs to the EPSP synthase family. MurA subfamily.

It localises to the cytoplasm. The catalysed reaction is phosphoenolpyruvate + UDP-N-acetyl-alpha-D-glucosamine = UDP-N-acetyl-3-O-(1-carboxyvinyl)-alpha-D-glucosamine + phosphate. It functions in the pathway cell wall biogenesis; peptidoglycan biosynthesis. Functionally, cell wall formation. Adds enolpyruvyl to UDP-N-acetylglucosamine. In Mycobacterium bovis (strain ATCC BAA-935 / AF2122/97), this protein is UDP-N-acetylglucosamine 1-carboxyvinyltransferase.